We begin with the raw amino-acid sequence, 277 residues long: Large ribosomal subunit protein uL2 (277 aa).

The disordered stretch occupies residues 225-277; that stretch reads AMNPVDHPHGGGEGKTSGGRHPVSPWGRPEGKTRRANKPSDRFIIRRKSRKRR. Basic and acidic residues predominate over residues 253–268; it reads PEGKTRRANKPSDRFI.

This sequence belongs to the universal ribosomal protein uL2 family. Part of the 50S ribosomal subunit. Forms a bridge to the 30S subunit in the 70S ribosome.

Functionally, one of the primary rRNA binding proteins. Required for association of the 30S and 50S subunits to form the 70S ribosome, for tRNA binding and peptide bond formation. It has been suggested to have peptidyltransferase activity; this is somewhat controversial. Makes several contacts with the 16S rRNA in the 70S ribosome. This chain is Large ribosomal subunit protein uL2, found in Tropheryma whipplei (strain TW08/27) (Whipple's bacillus).